We begin with the raw amino-acid sequence, 256 residues long: Small ribosomal subunit protein eS1 (256 aa).

The span at 1–18 (MAVGKNKRLSKGKKGLKK) shows a compositional bias: basic residues. The disordered stretch occupies residues 1-20 (MAVGKNKRLSKGKKGLKKKA). The residue at position 2 (A2) is an N-acetylalanine; partial.

The protein belongs to the eukaryotic ribosomal protein eS1 family. Component of the small ribosomal subunit. Mature ribosomes consist of a small (40S) and a large (60S) subunit. The 40S subunit contains about 33 different proteins and 1 molecule of RNA (18S). The 60S subunit contains about 49 different proteins and 3 molecules of RNA (25S, 5.8S and 5S).

It localises to the cytoplasm. The sequence is that of Small ribosomal subunit protein eS1 from Chaetomium globosum (strain ATCC 6205 / CBS 148.51 / DSM 1962 / NBRC 6347 / NRRL 1970) (Soil fungus).